Here is a 493-residue protein sequence, read N- to C-terminus: Probable cytosol aminopeptidase (493 aa).

2 residues coordinate Mn(2+): lysine 256 and aspartate 261. The active site involves lysine 268. Mn(2+) is bound by residues aspartate 279, aspartate 338, and glutamate 340. Arginine 342 is an active-site residue.

It belongs to the peptidase M17 family. It depends on Mn(2+) as a cofactor.

The protein localises to the cytoplasm. It catalyses the reaction Release of an N-terminal amino acid, Xaa-|-Yaa-, in which Xaa is preferably Leu, but may be other amino acids including Pro although not Arg or Lys, and Yaa may be Pro. Amino acid amides and methyl esters are also readily hydrolyzed, but rates on arylamides are exceedingly low.. It carries out the reaction Release of an N-terminal amino acid, preferentially leucine, but not glutamic or aspartic acids.. Its function is as follows. Presumably involved in the processing and regular turnover of intracellular proteins. Catalyzes the removal of unsubstituted N-terminal amino acids from various peptides. This chain is Probable cytosol aminopeptidase, found in Phytoplasma australiense.